The following is a 234-amino-acid chain: Sugar fermentation stimulation protein homolog (234 aa).

This sequence belongs to the SfsA family.

This chain is Sugar fermentation stimulation protein homolog, found in Idiomarina loihiensis (strain ATCC BAA-735 / DSM 15497 / L2-TR).